We begin with the raw amino-acid sequence, 155 residues long: MSRRGTAEEKTAKSDPIYRNRLVNMLVNRILKNGKKSLAYQIIYRAVKKIQQKTETNPLSVLRQAIRGVTPDIAVKARRVGGSTHQVPIEIGSTQGKALAIRWLLGASRKRPGRNMDFRLSSELVDAAKGSGDAIRKKEETHRMAEANRAFAHFR.

The protein belongs to the universal ribosomal protein uS7 family. As to quaternary structure, part of the 30S ribosomal subunit.

Its subcellular location is the plastid. It localises to the chloroplast. Functionally, one of the primary rRNA binding proteins, it binds directly to 16S rRNA where it nucleates assembly of the head domain of the 30S subunit. The chain is Small ribosomal subunit protein uS7cz/uS7cy (rps7-A) from Phalaenopsis aphrodite subsp. formosana (Moth orchid).